The sequence spans 409 residues: DNA double-strand break repair protein Mre11 (409 aa).

The Mn(2+) site is built by Asp-9, His-11, Asp-50, and Glu-85. Residue His-86 is the Proton donor of the active site. Mn(2+)-binding residues include His-170, His-199, and His-201.

This sequence belongs to the MRE11/RAD32 family. Homodimer. Forms a heterotetramer composed of two Mre11 subunits and two Rad50 subunits. Requires Mn(2+) as cofactor.

Nuclease activity is regulated by Rad50. Part of the Rad50/Mre11 complex, which is involved in the early steps of DNA double-strand break (DSB) repair. The complex may facilitate opening of the processed DNA ends to aid in the recruitment of HerA and NurA. Mre11 binds to DSB ends and has both double-stranded 3'-5' exonuclease activity and single-stranded endonuclease activity. This chain is DNA double-strand break repair protein Mre11, found in Aeropyrum pernix (strain ATCC 700893 / DSM 11879 / JCM 9820 / NBRC 100138 / K1).